A 406-amino-acid chain; its full sequence is Zinc metalloprotease Rip1 (406 aa).

A helical transmembrane segment spans residues 1–21 (MMFGIGIVLFALAILVSVALH). Residue H21 coordinates Zn(2+). Residue E22 is part of the active site. Zn(2+) is bound at residue H25. Residues 108–128 (PAMNFVIGLVLIYGIAIVWGL) form a helical membrane-spanning segment. In terms of domain architecture, PDZ spans 125-209 (VWGLPNLHQP…RIEFKRDGRV (85 aa)). A Zn(2+)-binding site is contributed by D206. 2 helical membrane-spanning segments follow: residues 327 to 349 (NFVLGAINLVPLLPFDGGHIAVA) and 375 to 395 (LMPATYVVLAVVAGYMLLTVT).

The protein belongs to the peptidase M50B family. The cofactor is Zn(2+).

It localises to the cell membrane. With respect to regulation, proteolysis is inhibited by Wag31; when Wag31 is non-functional oxidative stress increases proteolysis. In terms of biological role, a probable intramembrane site-2 protease (S2P) that cleaves type-2 transmembrane proteins within their membrane-spanning domains. Degrades PbpB (PBP3, FtsI) under conditions of oxidatives stress; degradation is inhibited by Wag31-PbpB interaction. Also cleaves anti-sigma factors RskA, RslA and RslM. Site-1 proteases have not yet been identified in this organism. Regulated intramembrane proteolysis (RIP) occurs when an extracytoplasmic signal (possibly oxidative stress) triggers a concerted proteolytic cascade to transmit information and elicit cellular responses. The membrane-spanning regulatory substrate protein (includes anti-sigma factors RskA, RslA, RsmA, and PbpB) is first cut extracytoplasmically (site-1 protease, S1P), then within the membrane itself (site-2 protease, S2P, this entry), while cytoplasmic proteases finish degrading the regulatory protein, liberating the effector protein (ECF sigma factors SigK, SigL and SigM). This chain is Zinc metalloprotease Rip1 (rip1), found in Mycolicibacterium smegmatis (strain ATCC 700084 / mc(2)155) (Mycobacterium smegmatis).